A 216-amino-acid polypeptide reads, in one-letter code: Cytidylate kinase (216 aa).

10-18 (GPAGAGKST) is a binding site for ATP.

The protein belongs to the cytidylate kinase family. Type 1 subfamily.

The protein localises to the cytoplasm. It carries out the reaction CMP + ATP = CDP + ADP. It catalyses the reaction dCMP + ATP = dCDP + ADP. The chain is Cytidylate kinase from Clostridioides difficile (strain 630) (Peptoclostridium difficile).